Here is a 297-residue protein sequence, read N- to C-terminus: Protein muscleblind (297 aa).

C3H1-type zinc fingers lie at residues 18-46 (WLQL…HPPA) and 52-80 (NGKV…HPPQ).

Belongs to the muscleblind family. Expressed in embryonic muscle cells.

It is found in the nucleus. Its function is as follows. Required for terminal differentiation of photoreceptor cells. Vital for embryonic development. The sequence is that of Protein muscleblind (mbl) from Drosophila melanogaster (Fruit fly).